Reading from the N-terminus, the 351-residue chain is DNA polymerase IV (351 aa).

Residues 4-185 (IIHVDMDCFF…LPLAKIPGVG (182 aa)) form the UmuC domain. Residues Asp8 and Asp103 each coordinate Mg(2+). Glu104 is a catalytic residue.

This sequence belongs to the DNA polymerase type-Y family. As to quaternary structure, monomer. The cofactor is Mg(2+).

It is found in the cytoplasm. The catalysed reaction is DNA(n) + a 2'-deoxyribonucleoside 5'-triphosphate = DNA(n+1) + diphosphate. Its function is as follows. Poorly processive, error-prone DNA polymerase involved in untargeted mutagenesis. Copies undamaged DNA at stalled replication forks, which arise in vivo from mismatched or misaligned primer ends. These misaligned primers can be extended by PolIV. Exhibits no 3'-5' exonuclease (proofreading) activity. May be involved in translesional synthesis, in conjunction with the beta clamp from PolIII. The chain is DNA polymerase IV from Salmonella paratyphi B (strain ATCC BAA-1250 / SPB7).